We begin with the raw amino-acid sequence, 228 residues long: Putative N-acetylmannosamine-6-phosphate 2-epimerase (228 aa).

Belongs to the NanE family.

The enzyme catalyses an N-acyl-D-glucosamine 6-phosphate = an N-acyl-D-mannosamine 6-phosphate. The protein operates within amino-sugar metabolism; N-acetylneuraminate degradation; D-fructose 6-phosphate from N-acetylneuraminate: step 3/5. In terms of biological role, converts N-acetylmannosamine-6-phosphate (ManNAc-6-P) to N-acetylglucosamine-6-phosphate (GlcNAc-6-P). This is Putative N-acetylmannosamine-6-phosphate 2-epimerase from Mycoplasmopsis pulmonis (strain UAB CTIP) (Mycoplasma pulmonis).